Here is a 399-residue protein sequence, read N- to C-terminus: Phosphoglycerate kinase (399 aa).

Substrate is bound by residues 22–24, R37, 60–63, R118, and R151; these read DFN and HFGR. ATP is bound by residues K201, E322, and 352 to 355; that span reads GGDS.

It belongs to the phosphoglycerate kinase family. Monomer.

It localises to the cytoplasm. The enzyme catalyses (2R)-3-phosphoglycerate + ATP = (2R)-3-phospho-glyceroyl phosphate + ADP. Its pathway is carbohydrate degradation; glycolysis; pyruvate from D-glyceraldehyde 3-phosphate: step 2/5. The protein is Phosphoglycerate kinase of Wolbachia sp. subsp. Brugia malayi (strain TRS).